A 204-amino-acid chain; its full sequence is Per os infectivity factor 3 (204 aa).

As to quaternary structure, forms the PIF complex together with PIF1 and PIF2. The complex also interacts with per os infectivity factor PIF0.

Functionally, per os factor that plays a role in the initiation of host midgut infection. Unlike PIF1 and PIF2, PIF3 is not involved in specific binding of occluded virions (ODV) to the host midgut target cells. The sequence is that of Per os infectivity factor 3 (AC115) from Lepidoptera (butterflies and moths).